A 143-amino-acid chain; its full sequence is Peptide methionine sulfoxide reductase MsrB (143 aa).

The 124-residue stretch at 16-139 (DAELRRRLTP…NSAALNFESR (124 aa)) folds into the MsrB domain. Positions 55, 58, 104, and 107 each coordinate Zn(2+). Cys-128 acts as the Nucleophile in catalysis.

Belongs to the MsrB Met sulfoxide reductase family. Zn(2+) serves as cofactor.

The catalysed reaction is L-methionyl-[protein] + [thioredoxin]-disulfide + H2O = L-methionyl-(R)-S-oxide-[protein] + [thioredoxin]-dithiol. The polypeptide is Peptide methionine sulfoxide reductase MsrB (Burkholderia ambifaria (strain ATCC BAA-244 / DSM 16087 / CCUG 44356 / LMG 19182 / AMMD) (Burkholderia cepacia (strain AMMD))).